A 207-amino-acid chain; its full sequence is Transcriptional regulator YqjI (207 aa).

Positions 1–40 (MSHHHEGCCKHEGQPRHEGCCKGEKSEHEHCGHGHQHEHG) are enriched in basic and acidic residues. A disordered region spans residues 1-46 (MSHHHEGCCKHEGQPRHEGCCKGEKSEHEHCGHGHQHEHGQCCGGR).

Oligomer (probable predominant form) and monomer.

Divalent metals such as nickel and iron have a similar negative effect on YqjI DNA-binding activity. Functionally, represses the expression of YqjH which is involved in iron homeostasis under excess nickel conditions. Also represses its own expression. The polypeptide is Transcriptional regulator YqjI (yqjI) (Escherichia coli (strain K12)).